The sequence spans 98 residues: DNA-binding protein Fis (98 aa).

Residues 74-93 (QTRAATMLGINRGTLRKKLK) constitute a DNA-binding region (H-T-H motif).

This sequence belongs to the transcriptional regulatory Fis family. Homodimer.

In terms of biological role, activates ribosomal RNA transcription. Plays a direct role in upstream activation of rRNA promoters. The protein is DNA-binding protein Fis of Mannheimia haemolytica (Pasteurella haemolytica).